Reading from the N-terminus, the 72-residue chain is Cell division protein ZapB (72 aa).

A coiled-coil region spans residues 5 to 71; sequence ILDQLEEKIK…LRSLLGQIDN (67 aa).

This sequence belongs to the ZapB family. As to quaternary structure, homodimer. The ends of the coiled-coil dimer bind to each other, forming polymers. Interacts with FtsZ.

It localises to the cytoplasm. Functionally, non-essential, abundant cell division factor that is required for proper Z-ring formation. It is recruited early to the divisome by direct interaction with FtsZ, stimulating Z-ring assembly and thereby promoting cell division earlier in the cell cycle. Its recruitment to the Z-ring requires functional FtsA or ZipA. This chain is Cell division protein ZapB, found in Actinobacillus pleuropneumoniae serotype 5b (strain L20).